The chain runs to 116 residues: Putative pterin-4-alpha-carbinolamine dehydratase (116 aa).

The protein belongs to the pterin-4-alpha-carbinolamine dehydratase family.

It catalyses the reaction (4aS,6R)-4a-hydroxy-L-erythro-5,6,7,8-tetrahydrobiopterin = (6R)-L-erythro-6,7-dihydrobiopterin + H2O. The sequence is that of Putative pterin-4-alpha-carbinolamine dehydratase from Paracidovorax citrulli (strain AAC00-1) (Acidovorax citrulli).